A 287-amino-acid chain; its full sequence is uncharacterized protein (287 aa).

Transmembrane regions (helical) follow at residues 4 to 24, 36 to 56, 66 to 86, 93 to 113, 122 to 142, 148 to 168, 179 to 199, 208 to 228, 237 to 259, and 264 to 286; these read TTNGWINGFIGVLIFSGSLPA, FLTVCRAAIAGVLAGGLLLIF, LISLLVVAFGVVIGFPLLTAL, SAHAIVFIGLLPLATAVFGVL, VFWIFSAAGSLLVAGFALIQG, LGDAYMLASIVVCGLGYAEGA, VISWALVLSLPLMLPLSFFFT, VPALLSLAYVSLFSMLIGFVF, GIAAVGQLQLLQPFFGLLLASVI, and VGWALVAVNIAVIMCVAAARRFA. EamA domains lie at 16 to 139 and 158 to 284; these read LIFS…GFAL and VVCG…AARR.

It belongs to the EamA transporter family.

It is found in the cell membrane. This is an uncharacterized protein from Bacillus subtilis (strain 168).